The following is a 581-amino-acid chain: Putative ABC transporter ATP-binding protein MM_1996 (581 aa).

An ABC transporter 1 domain is found at 10 to 250 (IEIRDLWYTY…LEVFHRLGLR (241 aa)). ATP is bound at residue 44-51 (GPTGCGKS). A disordered region spans residues 287–309 (GDYPASPGRKEKTSSPGWSSENN). A compositionally biased stretch (polar residues) spans 300 to 309 (SSPGWSSENN). The ABC transporter 2 domain maps to 313–541 (VSVRDLWSGY…IDILRKASLT (229 aa)). Position 346 to 353 (346 to 353 (GTNGSGKS)) interacts with ATP.

This sequence belongs to the ABC transporter superfamily.

The protein localises to the cell membrane. Probably part of an ABC transporter complex. Responsible for energy coupling to the transport system. The polypeptide is Putative ABC transporter ATP-binding protein MM_1996 (Methanosarcina mazei (strain ATCC BAA-159 / DSM 3647 / Goe1 / Go1 / JCM 11833 / OCM 88) (Methanosarcina frisia)).